The primary structure comprises 310 residues: Spermatid maturation protein 1 (310 aa).

A helical transmembrane segment spans residues 29 to 49 (ILLLLGLIVCINIGINLVTLL). The disordered stretch occupies residues 215–238 (ALSHKNNAAGSGGCVEGEQAQGQP). Residues 262-286 (VYDARDVRRRLRELTQEVEALSHCY) are a coiled coil.

Testis-specific. Exclusively present in cytoplasm of steps 14-16 elongated spermatids (at protein level).

Its subcellular location is the membrane. It localises to the cytoplasm. Its function is as follows. Required for proper cytoplasm removal during spermatogenesis. The polypeptide is Spermatid maturation protein 1 (Spem1) (Mus musculus (Mouse)).